The following is an 82-amino-acid chain: Small ribosomal subunit protein bS18 (82 aa).

It belongs to the bacterial ribosomal protein bS18 family. As to quaternary structure, part of the 30S ribosomal subunit. Forms a tight heterodimer with protein bS6.

In terms of biological role, binds as a heterodimer with protein bS6 to the central domain of the 16S rRNA, where it helps stabilize the platform of the 30S subunit. The sequence is that of Small ribosomal subunit protein bS18 from Rhizobium rhizogenes (strain K84 / ATCC BAA-868) (Agrobacterium radiobacter).